A 688-amino-acid chain; its full sequence is MTHKQRAIFEPALVRTALLDAVKKLDPRVQWRNPVMFVVYLGSWLTTLIWLDILSGHTTGSAMFTGSIALWLWFTVLFANMAEALAEGRSKAQAASLRGVKKTSWAKKLSEARVDAPQEKVSADSLRKGDLVLIEAGDTVPCDGEVLEGGASVDESAITGESAPVIRESGGDFSSVTGGTRVLSDWLVVECRVNPGETFLDRMIAMVEGAKRRKTPNEVALTILLVALTIVFLLATATLYPFSVFSVEASQAGSPVTITVLVALLVCLIPTTIGGLLSAIGVAGMSRMLGANVIATSGRAVEAAGDVDVLLLDKTGTITLGNRQASEFLPAPGVTEQQLADAAQLSSLADETPEGRSIVVLAKQRFNLRERDLHSLNATFIPFSAQTRMSGVNVQERMIRKGAVDAIRRHVESNQGHFPPAVDDLVASVARTGGTPLVVAEGSRVLGVVALKDIVKGGIKERFAELRKMGIKTVMITGDNRLTAAAIAAEAGVDDFLAEATPEAKLALIRQYQAEGRLVAMTGDGTNDAPALAQADVAVAMNSGTQAAKEAGNMVDLDSNPTKLIEVVHIGKQMLMTRGSLTTFSIANDVAKYFAIIPAAFAATYPQLNALNIMQLHSPSSAILSAVIFNALVIVFLIPLALKGVSYKAMSAAALLRRNLWIYGLGGLLVPFVGIKLIDLLLTALNMG.

The next 4 membrane-spanning stretches (helical) occupy residues 34-54 (PVMF…LDIL), 62-82 (AMFT…ANMA), 219-239 (VALT…TATL), and 260-280 (VLVA…LSAI). D313 (4-aspartylphosphate intermediate) is an active-site residue. Residues D350, E354, 383–390 (FSAQTRMS), and K401 contribute to the ATP site. Positions 524 and 528 each coordinate Mg(2+). The next 3 helical transmembrane spans lie at 594-614 (FAII…LNIM), 622-642 (AILS…PLAL), and 662-682 (IYGL…DLLL).

The protein belongs to the cation transport ATPase (P-type) (TC 3.A.3) family. Type IA subfamily. As to quaternary structure, the system is composed of three essential subunits: KdpA, KdpB and KdpC.

It is found in the cell inner membrane. The catalysed reaction is K(+)(out) + ATP + H2O = K(+)(in) + ADP + phosphate + H(+). In terms of biological role, part of the high-affinity ATP-driven potassium transport (or Kdp) system, which catalyzes the hydrolysis of ATP coupled with the electrogenic transport of potassium into the cytoplasm. This subunit is responsible for energy coupling to the transport system and for the release of the potassium ions to the cytoplasm. The polypeptide is Potassium-transporting ATPase ATP-binding subunit (Yersinia pestis bv. Antiqua (strain Antiqua)).